The chain runs to 197 residues: Small ribosomal subunit protein uS4c (197 aa).

Positions 85–161 (MRLDNILFRL…TGKELANHLN (77 aa)) constitute an S4 RNA-binding domain.

Belongs to the universal ribosomal protein uS4 family. Part of the 30S ribosomal subunit. Contacts protein S5. The interaction surface between S4 and S5 is involved in control of translational fidelity.

The protein resides in the plastid. Functionally, one of the primary rRNA binding proteins, it binds directly to 16S rRNA where it nucleates assembly of the body of the 30S subunit. Its function is as follows. With S5 and S12 plays an important role in translational accuracy. This is Small ribosomal subunit protein uS4c (rps4) from Cuscuta obtusiflora (Peruvian dodder).